The primary structure comprises 62 residues: Photosystem II reaction center protein Z (62 aa).

Helical transmembrane passes span 8-28 and 41-61; these read ALAA…FAYA and WVGS…NFFV.

Belongs to the PsbZ family. In terms of assembly, PSII is composed of 1 copy each of membrane proteins PsbA, PsbB, PsbC, PsbD, PsbE, PsbF, PsbH, PsbI, PsbJ, PsbK, PsbL, PsbM, PsbT, PsbX, PsbY, PsbZ, Psb30/Ycf12, peripheral proteins PsbO, CyanoQ (PsbQ), PsbU, PsbV and a large number of cofactors. It forms dimeric complexes.

The protein localises to the cellular thylakoid membrane. Its function is as follows. May control the interaction of photosystem II (PSII) cores with the light-harvesting antenna, regulates electron flow through the 2 photosystem reaction centers. PSII is a light-driven water plastoquinone oxidoreductase, using light energy to abstract electrons from H(2)O, generating a proton gradient subsequently used for ATP formation. This chain is Photosystem II reaction center protein Z, found in Gloeothece citriformis (strain PCC 7424) (Cyanothece sp. (strain PCC 7424)).